Consider the following 296-residue polypeptide: 4-hydroxy-tetrahydrodipicolinate synthase (296 aa).

Threonine 49 contributes to the pyruvate binding site. Catalysis depends on tyrosine 137, which acts as the Proton donor/acceptor. The active-site Schiff-base intermediate with substrate is lysine 165. Isoleucine 207 provides a ligand contact to pyruvate.

It belongs to the DapA family. In terms of assembly, homotetramer; dimer of dimers.

The protein localises to the cytoplasm. It carries out the reaction L-aspartate 4-semialdehyde + pyruvate = (2S,4S)-4-hydroxy-2,3,4,5-tetrahydrodipicolinate + H2O + H(+). It functions in the pathway amino-acid biosynthesis; L-lysine biosynthesis via DAP pathway; (S)-tetrahydrodipicolinate from L-aspartate: step 3/4. Catalyzes the condensation of (S)-aspartate-beta-semialdehyde [(S)-ASA] and pyruvate to 4-hydroxy-tetrahydrodipicolinate (HTPA). The polypeptide is 4-hydroxy-tetrahydrodipicolinate synthase (Bradyrhizobium diazoefficiens (strain JCM 10833 / BCRC 13528 / IAM 13628 / NBRC 14792 / USDA 110)).